The primary structure comprises 340 residues: Adenosine deaminase (340 aa).

Positions 15 and 17 each coordinate Zn(2+). 3 residues coordinate substrate: histidine 17, aspartate 19, and glycine 172. Residue histidine 199 participates in Zn(2+) binding. The active-site Proton donor is glutamate 202. Position 279 (aspartate 279) interacts with Zn(2+).

It belongs to the metallo-dependent hydrolases superfamily. Adenosine and AMP deaminases family. Adenosine deaminase subfamily. Zn(2+) is required as a cofactor.

The catalysed reaction is adenosine + H2O + H(+) = inosine + NH4(+). It carries out the reaction 2'-deoxyadenosine + H2O + H(+) = 2'-deoxyinosine + NH4(+). Its function is as follows. Catalyzes the hydrolytic deamination of adenosine and 2-deoxyadenosine. This is Adenosine deaminase from Streptococcus agalactiae serotype Ia (strain ATCC 27591 / A909 / CDC SS700).